Reading from the N-terminus, the 531-residue chain is MLGKEEEFTCKQKQCLSHFVTNLTSDVFALKNLPEVVKGALFSKYSRSVLGLRALLLKEFLSNEEDGDVCDEAYDFETDVQKAADFYQRVLDNFGDDSVGELGGAHLAMENVSILAAKVLEDARIGGSPLEKSTRYVYFDQKVRGEYLYYRDPILMTSAFKDMFLGTCDFLFDTYSALIPQVRAYFEKLYPKDSKTPASAYATSLRAKVLDCIRGLLPAATLTNLGFFGNGRFWQNLIHKLQGHNLAELRRLGDESLTELMKVIPSFVSRAEPHHHHHQAMMQYRRALKEQLKGLAEQATFSEEMSSSPSVQLVYGDPDGIYKVAAGFLFPYSNRSLTDLIDYCKKMPHEDLVQILESSVSARENRRHKSPRGLECVEFGFDILADFGAYRDLQRHRTLTQERQLLSTHHGYNFPVELLDTPMEKSYREAMERANETYNEIVQEFPEEAQYMVPMAYNIRWFFHVNARALQWICELRSQPQGHQNYRTIATGLVREVVKFNPMYELFFKFVDYSDIDLGRLNQEMRKEPTT.

ThyX domains follow at residues 38–274 and 309–511; these read KGAL…AEPH and PSVQ…FKFV.

Belongs to the UPF0159 family.

The sequence is that of UPF0159 protein CPn_0746/CP_1126/CPj0746/CpB0774 from Chlamydia pneumoniae (Chlamydophila pneumoniae).